Here is a 386-residue protein sequence, read N- to C-terminus: Ribonucleoside-diphosphate reductase subunit M2 (386 aa).

A compositionally biased stretch (polar residues) spans methionine 1–serine 24. The interval methionine 1–serine 36 is disordered. The residue at position 6 (serine 6) is a Phosphoserine. Threonine 31 carries the post-translational modification Phosphothreonine. Fe cation contacts are provided by aspartate 135, glutamate 166, and histidine 169. Tyrosine 173 is an active-site residue. 3 residues coordinate Fe cation: glutamate 229, glutamate 263, and histidine 266.

This sequence belongs to the ribonucleoside diphosphate reductase small chain family. Heterodimer of a large and a small subunit. It depends on Fe cation as a cofactor.

It localises to the cytoplasm. The enzyme catalyses a 2'-deoxyribonucleoside 5'-diphosphate + [thioredoxin]-disulfide + H2O = a ribonucleoside 5'-diphosphate + [thioredoxin]-dithiol. In terms of biological role, provides the precursors necessary for DNA synthesis. Catalyzes the biosynthesis of deoxyribonucleotides from the corresponding ribonucleotides. The chain is Ribonucleoside-diphosphate reductase subunit M2 (rrm2) from Danio rerio (Zebrafish).